Here is a 274-residue protein sequence, read N- to C-terminus: 3-methyl-2-oxobutanoate hydroxymethyltransferase (274 aa).

D46 and D85 together coordinate Mg(2+). 3-methyl-2-oxobutanoate contacts are provided by residues 46–47, D85, and K115; that span reads DS. E117 contacts Mg(2+). E184 acts as the Proton acceptor in catalysis.

The protein belongs to the PanB family. As to quaternary structure, homodecamer; pentamer of dimers. Requires Mg(2+) as cofactor.

It localises to the cytoplasm. It catalyses the reaction 3-methyl-2-oxobutanoate + (6R)-5,10-methylene-5,6,7,8-tetrahydrofolate + H2O = 2-dehydropantoate + (6S)-5,6,7,8-tetrahydrofolate. The protein operates within cofactor biosynthesis; (R)-pantothenate biosynthesis; (R)-pantoate from 3-methyl-2-oxobutanoate: step 1/2. In terms of biological role, catalyzes the reversible reaction in which hydroxymethyl group from 5,10-methylenetetrahydrofolate is transferred onto alpha-ketoisovalerate to form ketopantoate. The sequence is that of 3-methyl-2-oxobutanoate hydroxymethyltransferase from Thermoanaerobacter pseudethanolicus (strain ATCC 33223 / 39E) (Clostridium thermohydrosulfuricum).